The sequence spans 149 residues: MKIITQNKKAHFEYFIEQKFVAGIKLQGSEVKSIRAGKCSINEAYITFRNGEVFILNMHIAKFDASSIFNHEETRTRKLLLNRSEIDKLMGAQTRDGMTIIPLTVELHEGLIKVVIALAKGKKLFDKRETIKERDIKREQQQSLKGKMR.

The protein belongs to the SmpB family.

It localises to the cytoplasm. Functionally, required for rescue of stalled ribosomes mediated by trans-translation. Binds to transfer-messenger RNA (tmRNA), required for stable association of tmRNA with ribosomes. tmRNA and SmpB together mimic tRNA shape, replacing the anticodon stem-loop with SmpB. tmRNA is encoded by the ssrA gene; the 2 termini fold to resemble tRNA(Ala) and it encodes a 'tag peptide', a short internal open reading frame. During trans-translation Ala-aminoacylated tmRNA acts like a tRNA, entering the A-site of stalled ribosomes, displacing the stalled mRNA. The ribosome then switches to translate the ORF on the tmRNA; the nascent peptide is terminated with the 'tag peptide' encoded by the tmRNA and targeted for degradation. The ribosome is freed to recommence translation, which seems to be the essential function of trans-translation. This chain is SsrA-binding protein, found in Acholeplasma laidlawii (strain PG-8A).